Here is a 101-residue protein sequence, read N- to C-terminus: Small ribosomal subunit protein uS10 (101 aa).

Belongs to the universal ribosomal protein uS10 family. In terms of assembly, part of the 30S ribosomal subunit.

Functionally, involved in the binding of tRNA to the ribosomes. This chain is Small ribosomal subunit protein uS10, found in Methanocaldococcus jannaschii (strain ATCC 43067 / DSM 2661 / JAL-1 / JCM 10045 / NBRC 100440) (Methanococcus jannaschii).